The chain runs to 138 residues: Large ribosomal subunit protein bL17 (138 aa).

Belongs to the bacterial ribosomal protein bL17 family. As to quaternary structure, part of the 50S ribosomal subunit. Contacts protein L32.

This chain is Large ribosomal subunit protein bL17, found in Methylorubrum extorquens (strain CM4 / NCIMB 13688) (Methylobacterium extorquens).